Consider the following 1006-residue polypeptide: uncharacterized protein (1006 aa).

A disordered region spans residues 326–371; that stretch reads EMEKKRPRSPELVPKKIVMEKERPSSPDSEAEEREHNLRIEKERHQ. Basic and acidic residues-rich tracts occupy residues 338–350 and 358–371; these read VPKK…ERPS and EREH…ERHQ. Coiled-coil stretches lie at residues 358 to 473 and 756 to 782; these read EREH…ARLA and EVQK…AFGR.

This is an uncharacterized protein from Caenorhabditis elegans.